A 400-amino-acid chain; its full sequence is Argininosuccinate synthase (400 aa).

Position 8–16 (8–16 (AYSGGLDTS)) interacts with ATP. Tyr87 is a binding site for L-citrulline. Position 117 (Gly117) interacts with ATP. The L-aspartate site is built by Thr119, Asn123, and Asp124. Asn123 is an L-citrulline binding site. L-citrulline contacts are provided by Arg127, Ser175, Glu260, and Tyr272.

It belongs to the argininosuccinate synthase family. Type 1 subfamily. In terms of assembly, homotetramer.

The protein resides in the cytoplasm. The enzyme catalyses L-citrulline + L-aspartate + ATP = 2-(N(omega)-L-arginino)succinate + AMP + diphosphate + H(+). Its pathway is amino-acid biosynthesis; L-arginine biosynthesis; L-arginine from L-ornithine and carbamoyl phosphate: step 2/3. The protein is Argininosuccinate synthase of Mycobacterium sp. (strain KMS).